The following is a 361-amino-acid chain: Phospho-N-acetylmuramoyl-pentapeptide-transferase (361 aa).

The next 10 membrane-spanning stretches (helical) occupy residues 28-48 (LAII…IKFL), 74-94 (TMGG…LADL), 99-119 (IWIT…DDYA), 133-153 (SKLL…EYLD), 168-188 (LSLD…VGSS), 203-223 (VPIA…GNLI), 236-256 (TGEL…FLWF), 263-283 (VFMG…ISVI), 288-308 (IVLA…ILQV), and 338-358 (KVVI…LSSL).

This sequence belongs to the glycosyltransferase 4 family. MraY subfamily. Requires Mg(2+) as cofactor.

It localises to the cell inner membrane. It catalyses the reaction UDP-N-acetyl-alpha-D-muramoyl-L-alanyl-gamma-D-glutamyl-meso-2,6-diaminopimeloyl-D-alanyl-D-alanine + di-trans,octa-cis-undecaprenyl phosphate = di-trans,octa-cis-undecaprenyl diphospho-N-acetyl-alpha-D-muramoyl-L-alanyl-D-glutamyl-meso-2,6-diaminopimeloyl-D-alanyl-D-alanine + UMP. The protein operates within cell wall biogenesis; peptidoglycan biosynthesis. Functionally, catalyzes the initial step of the lipid cycle reactions in the biosynthesis of the cell wall peptidoglycan: transfers peptidoglycan precursor phospho-MurNAc-pentapeptide from UDP-MurNAc-pentapeptide onto the lipid carrier undecaprenyl phosphate, yielding undecaprenyl-pyrophosphoryl-MurNAc-pentapeptide, known as lipid I. This Rickettsia felis (strain ATCC VR-1525 / URRWXCal2) (Rickettsia azadi) protein is Phospho-N-acetylmuramoyl-pentapeptide-transferase.